Consider the following 309-residue polypeptide: Ubiquitin domain-containing protein UBFD1 (309 aa).

A disordered region spans residues 1 to 80 (MAAAGAPDGM…VSNGEDAGGG (80 aa)). The span at 9-19 (GMEEPGMDTEA) shows a compositional bias: acidic residues. The span at 35–57 (EAEAAAGAAAEDSGAARGSLQPA) shows a compositional bias: low complexity. In terms of domain architecture, Ubiquitin-like spans 84–159 (ELVDLKIIWN…IMVVGSTIND (76 aa)). Residues 171–204 (QQDAKAEENKKEPLCRQKQHRKVLDKGKPEDVMP) form a disordered region. 2 stretches are compositionally biased toward basic and acidic residues: residues 174-185 (AKAEENKKEPLC) and 192-201 (KVLDKGKPED).

In terms of assembly, binds polyubiquitin.

May play a role as NF-kappa-B regulator. The protein is Ubiquitin domain-containing protein UBFD1 (UBFD1) of Homo sapiens (Human).